Reading from the N-terminus, the 105-residue chain is NADH-quinone oxidoreductase subunit K (105 aa).

Helical transmembrane passes span 8–28 (VTNG…GIII), 33–53 (ILIL…NFLI), and 65–85 (VFVF…LAIV).

Belongs to the complex I subunit 4L family. NDH-1 is composed of 14 different subunits. Subunits NuoA, H, J, K, L, M, N constitute the membrane sector of the complex.

The protein localises to the cell inner membrane. The enzyme catalyses a quinone + NADH + 5 H(+)(in) = a quinol + NAD(+) + 4 H(+)(out). In terms of biological role, NDH-1 shuttles electrons from NADH, via FMN and iron-sulfur (Fe-S) centers, to quinones in the respiratory chain. The immediate electron acceptor for the enzyme in this species is believed to be ubiquinone. Couples the redox reaction to proton translocation (for every two electrons transferred, four hydrogen ions are translocated across the cytoplasmic membrane), and thus conserves the redox energy in a proton gradient. This Francisella philomiragia subsp. philomiragia (strain ATCC 25017 / CCUG 19701 / FSC 153 / O#319-036) protein is NADH-quinone oxidoreductase subunit K.